Reading from the N-terminus, the 340-residue chain is Nuclear hormone receptor family member nhr-197 (340 aa).

The segment at residues 1–75 (MNCVVCSGRA…VGMTLAPLND (75 aa)) is a DNA-binding region (nuclear receptor). 2 consecutive NR C4-type zinc fingers follow at residues 3–23 (CVVCSGRATNRNYGAMSCFAC) and 39–58 (CKRIQNCTIHFKIFPKCRAC). The region spanning 98 to 337 (KNDKNYSHFV…KRIMQDLFSN (240 aa)) is the NR LBD domain.

The protein belongs to the nuclear hormone receptor family.

The protein localises to the nucleus. Orphan nuclear receptor. This is Nuclear hormone receptor family member nhr-197 (nhr-197) from Caenorhabditis elegans.